The chain runs to 159 residues: Probable metallophosphoesterase MPN_126 (159 aa).

Mn(2+)-binding residues include aspartate 9, histidine 11, aspartate 34, asparagine 53, histidine 75, histidine 107, and histidine 109.

Belongs to the metallophosphoesterase superfamily. YfcE family. Mn(2+) serves as cofactor.

This is Probable metallophosphoesterase MPN_126 from Mycoplasma pneumoniae (strain ATCC 29342 / M129 / Subtype 1) (Mycoplasmoides pneumoniae).